A 1143-amino-acid polypeptide reads, in one-letter code: ATP-dependent helicase/deoxyribonuclease subunit B (1143 aa).

The UvrD-like helicase ATP-binding domain occupies 1-274 (MNYMHLGRAG…YGQTVKFQST (274 aa)). 7 to 14 (GRAGTGKT) provides a ligand contact to ATP. A UvrD-like helicase C-terminal domain is found at 267–565 (QTVKFQSTGL…RFSLVPPSLD (299 aa)). Residues C782, C1104, C1107, and C1113 each coordinate [4Fe-4S] cluster.

It belongs to the helicase family. AddB/RexB type 1 subfamily. In terms of assembly, heterodimer of AddA and AddB. The cofactor is Mg(2+). [4Fe-4S] cluster serves as cofactor.

The heterodimer acts as both an ATP-dependent DNA helicase and an ATP-dependent, dual-direction single-stranded exonuclease. Recognizes the chi site generating a DNA molecule suitable for the initiation of homologous recombination. The AddB subunit has 5' -&gt; 3' nuclease activity but not helicase activity. In Exiguobacterium sibiricum (strain DSM 17290 / CCUG 55495 / CIP 109462 / JCM 13490 / 255-15), this protein is ATP-dependent helicase/deoxyribonuclease subunit B.